Reading from the N-terminus, the 526-residue chain is MIFFYFLTLTSFISVAFSYNILGVFPFQAKSHFGFIDPLLVRLAELGHNVTIYDPYPKSEKLPNYNEIDVSECFVFNTLYEEIDTFIKTAASPFSSLWYSFEETLAVFQKENFDKCAPLRELLNSTVKYDLLITETFLTDITLLFVNKFKIPFITSTPNVPFPWLADRMGNPLNPSYIPNLFSDYPFDKMTFFNRLWNTLFYVMALGGHNAIILKNEEKINKYYFGSSVPSLYNIARETSIMLINAHETLNPVIPLVPGMIPVSGIHIKQPAALPQNIEKFINESTHGVVYFCMGSLLRGETFPAEKRDAFLYAFSKIPQRVLWKWEGEVLPGKSENIMTSKWMPQRDILAHPNVKLFISHGGLLGTSEAVYEGVPVIGIPIFGDQRTNIKALEANGAGELLDYNDISGEVVLEKIQRLINDPKYKESARQLSIRYKDRPMSPLDTAVYWTEYVIRHKGAPHLKTAAVDMPWYQYLLLDVIAFLIFILVSVILIIYYGVKISLRYLCALIFGNSSSLKPTKKVKDN.

Topologically, residues 1 to 474 (MIFFYFLTLT…TAAVDMPWYQ (474 aa)) are lumenal. N-linked (GlcNAc...) asparagine glycosylation is found at N49, N124, and N283. The chain crosses the membrane as a helical span at residues 475 to 495 (YLLLDVIAFLIFILVSVILII). The Cytoplasmic portion of the chain corresponds to 496–526 (YYGVKISLRYLCALIFGNSSSLKPTKKVKDN).

It belongs to the UDP-glycosyltransferase family.

It localises to the microsome membrane. Functionally, catalyzes the transfer of a glycosyl group from a UDP-sugar to an acceptor molecule. This chain is UDP-glycosyltransferase UGT5, found in Dactylopius coccus (Cochineal).